The sequence spans 788 residues: Cyclin-F (788 aa).

Positions 20–28 match the Nuclear localization signal 1 motif; sequence KRRIRRRPR. The region spanning 29–76 is the F-box domain; the sequence is NLTILNLPEDALFHILKWLSVGDILAVRAVHSHLKYLVDNHASVWACA. The Cyclin N-terminal domain occupies 291–405; it reads HAVNKQRVFS…EVVSALDGKI (115 aa). 4 consecutive short sequence motifs (d box) follow at residues 310-313, 343-346, 349-352, and 351-354; these read RYIL, RRRL, RYRL, and RLQL. 2 disordered regions span residues 566–585 and 700–788; these read SARR…RGSF and TSGY…FLKL. The Nuclear localization signal 2 motif lies at 568 to 574; that stretch reads RRTKRKR. Positions 582 to 766 are PEST; sequence RGSFVTTPTA…ESCAPQQQVK (185 aa). Composition is skewed to polar residues over residues 700–716 and 723–738; these read TSGY…DSGR and RSTS…NTQP. Residues 767–770 carry the D box 5 motif; that stretch reads RKNL.

Belongs to the cyclin family. Cyclin AB subfamily. As to quaternary structure, component of the SCF(CCNF) complex consisting of CUL1, RBX1, SKP1 and CCNF. Interacts with SKP1. Interacts with CUL1. Interacts with CCNB1; interaction is required for nuclear localization of CCNB1. Interacts with CCP110; this interaction leads to CCP110 ubiquitination and degradation via the proteasome pathway. Interacts (via the Cyclin N-terminal domain) with MYBL2/BMYB. Interacts with FZR1/CDH1 (via N-terminus). Interacts with RRM2 (via Cy motif and when phosphorylated at 'Thr-33'); the interaction occurs exclusively in G2 and early M. Interacts with CDC6 (via Cy motif); the interaction takes place during G2 and M phase. Post-translationally, degraded when the spindle assembly checkpoint is activated during the G2-M transition. Degradation is not dependent on the proteasome or ubiquitin and depends on the C-terminal PEST sequence. In terms of processing, phosphorylated just before cells enter into mitosis. Ubiquitinated by the anaphase-promoting complex (APC/C); leading to its degradation by the proteasome.

It localises to the nucleus. It is found in the cytoplasm. The protein localises to the perinuclear region. Its subcellular location is the cytoskeleton. The protein resides in the microtubule organizing center. It localises to the centrosome. It is found in the centriole. Functionally, substrate recognition component of a SCF (SKP1-CUL1-F-box protein) E3 ubiquitin-protein ligase complex which mediates the ubiquitination and subsequent proteasomal degradation of target proteins. The SCF(CCNF) E3 ubiquitin-protein ligase complex is an integral component of the ubiquitin proteasome system (UPS) and links proteasome degradation to the cell cycle. Mediates the substrate recognition and the proteasomal degradation of various target proteins involved in the regulation of cell cycle progression and in the maintenance of genome stability. Mediates the ubiquitination and subsequent proteasomal degradation of CP110 during G2 phase, thereby acting as an inhibitor of centrosome reduplication. In G2, mediates the ubiquitination and proteasomal degradation of CDC6, thereby suppressing DNA re-replication and preventing genome instability. Involved in the ubiquitination and degradation of the substrate adapter CDH1 of the anaphase-promoting complex (APC/C), thereby acting as an antagonist of APC/C in regulating G1 progression and S phase entry. May play a role in the G2 cell cycle checkpoint control after DNA damage, possibly by promoting the ubiquitination of MYBL2/BMYB. In Bos taurus (Bovine), this protein is Cyclin-F (CCNF).